The sequence spans 420 residues: G2/mitotic-specific cyclin-A (420 aa).

The interval 64–93 (VQGSRIQPTRAAKEKLKPPQNISDSQLVND) is disordered. A compositionally biased stretch (polar residues) spans 83–93 (QNISDSQLVND).

The protein belongs to the cyclin family. Cyclin AB subfamily.

In terms of biological role, essential for the control of the cell cycle at the G2/M (mitosis) transition. Interacts with the CDC2 and CDK2 protein kinases to form MPF. G2/M cyclins accumulate steadily during G2 and are abruptly destroyed at mitosis. The sequence is that of G2/mitotic-specific cyclin-A from Hydra viridissima (Green hydra).